A 252-amino-acid chain; its full sequence is Flagellar brake protein YcgR (252 aa).

The PilZ domain maps to 123–238 (QRREFYRVPT…TLATVQKYIT (116 aa)).

This sequence belongs to the YcgR family. Monomer. Interacts with the flagellar basal bodies.

It localises to the bacterial flagellum basal body. Its function is as follows. Acts as a flagellar brake, regulating swimming and swarming in a bis-(3'-5') cyclic diguanylic acid (c-di-GMP)-dependent manner. Binds 1 c-di-GMP dimer per subunit. Increasing levels of c-di-GMP lead to decreased motility. The chain is Flagellar brake protein YcgR from Janthinobacterium sp. (strain Marseille) (Minibacterium massiliensis).